Consider the following 142-residue polypeptide: Hemoglobin subunit beta-2 (142 aa).

The Globin domain occupies 2-142; it reads SLTDEEKHLI…VTEALSCQYH (141 aa). Residues H59 and H88 each contribute to the heme b site.

It belongs to the globin family. Heterotetramer of two alpha chains and two beta chains. Red blood cells.

In terms of biological role, involved in oxygen transport from the lung to the various peripheral tissues. This is Hemoglobin subunit beta-2 (HBB2) from Torpedo marmorata (Marbled electric ray).